We begin with the raw amino-acid sequence, 166 residues long: NAD(P)H-quinone oxidoreductase subunit I, chloroplastic (166 aa).

4Fe-4S ferredoxin-type domains follow at residues 55-84 (GRIH…VDWK) and 95-124 (LNYS…MTEE). Residues C64, C67, C70, C74, C104, C107, C110, and C114 each contribute to the [4Fe-4S] cluster site.

The protein belongs to the complex I 23 kDa subunit family. In terms of assembly, NDH is composed of at least 16 different subunits, 5 of which are encoded in the nucleus. The cofactor is [4Fe-4S] cluster.

The protein localises to the plastid. It is found in the chloroplast thylakoid membrane. It carries out the reaction a plastoquinone + NADH + (n+1) H(+)(in) = a plastoquinol + NAD(+) + n H(+)(out). The enzyme catalyses a plastoquinone + NADPH + (n+1) H(+)(in) = a plastoquinol + NADP(+) + n H(+)(out). NDH shuttles electrons from NAD(P)H:plastoquinone, via FMN and iron-sulfur (Fe-S) centers, to quinones in the photosynthetic chain and possibly in a chloroplast respiratory chain. The immediate electron acceptor for the enzyme in this species is believed to be plastoquinone. Couples the redox reaction to proton translocation, and thus conserves the redox energy in a proton gradient. This Stevia rebaudiana (Stevia) protein is NAD(P)H-quinone oxidoreductase subunit I, chloroplastic.